Reading from the N-terminus, the 149-residue chain is MKKIDIKILDSRLKDQLPAYATSGSAGLDLRACIEHVMTIQPGEAHLIPTGIAIHLSDPGLAALVLPRSGLGHKHGIVMGNLVGLIDSDYQGQIFVSCWNRGQAPFLLNPLERIAQLVVVPVVQVGFKVVDDFEQSERGANGFGSTGKH.

Residues 68–70, N81, and 85–87 each bind substrate; these read RSG and LID.

It belongs to the dUTPase family. The cofactor is Mg(2+).

It carries out the reaction dUTP + H2O = dUMP + diphosphate + H(+). It functions in the pathway pyrimidine metabolism; dUMP biosynthesis; dUMP from dCTP (dUTP route): step 2/2. In terms of biological role, this enzyme is involved in nucleotide metabolism: it produces dUMP, the immediate precursor of thymidine nucleotides and it decreases the intracellular concentration of dUTP so that uracil cannot be incorporated into DNA. This chain is Deoxyuridine 5'-triphosphate nucleotidohydrolase, found in Nitrosospira multiformis (strain ATCC 25196 / NCIMB 11849 / C 71).